A 453-amino-acid polypeptide reads, in one-letter code: Aldehyde dehydrogenase, dimeric NADP-preferring (453 aa).

At serine 2 the chain carries N-acetylserine. Lysine 178 is modified (N6-acetyllysine). 188–193 (GSTGVG) serves as a coordination point for NAD(+). The residue at position 194 (lysine 194) is an N6-acetyllysine. Active-site residues include glutamate 210 and cysteine 244.

The protein belongs to the aldehyde dehydrogenase family. Homodimer. High levels in stomach, esophagus and lung; low level in the liver and kidney.

It is found in the cytoplasm. It carries out the reaction an aldehyde + NAD(+) + H2O = a carboxylate + NADH + 2 H(+). The enzyme catalyses octanal + NAD(+) + H2O = octanoate + NADH + 2 H(+). ALDHs play a major role in the detoxification of alcohol-derived acetaldehyde. They are involved in the metabolism of corticosteroids, biogenic amines, neurotransmitters, and lipid peroxidation. Oxidizes medium and long chain aldehydes into non-toxic fatty acids. Preferentially oxidizes aromatic aldehyde substrates. Comprises about 50 percent of corneal epithelial soluble proteins. May play a role in preventing corneal damage caused by ultraviolet light. This chain is Aldehyde dehydrogenase, dimeric NADP-preferring (ALDH3A1), found in Homo sapiens (Human).